Consider the following 572-residue polypeptide: Proline--tRNA ligase (572 aa).

The protein belongs to the class-II aminoacyl-tRNA synthetase family. ProS type 1 subfamily. Homodimer.

It is found in the cytoplasm. The enzyme catalyses tRNA(Pro) + L-proline + ATP = L-prolyl-tRNA(Pro) + AMP + diphosphate. Functionally, catalyzes the attachment of proline to tRNA(Pro) in a two-step reaction: proline is first activated by ATP to form Pro-AMP and then transferred to the acceptor end of tRNA(Pro). As ProRS can inadvertently accommodate and process non-cognate amino acids such as alanine and cysteine, to avoid such errors it has two additional distinct editing activities against alanine. One activity is designated as 'pretransfer' editing and involves the tRNA(Pro)-independent hydrolysis of activated Ala-AMP. The other activity is designated 'posttransfer' editing and involves deacylation of mischarged Ala-tRNA(Pro). The misacylated Cys-tRNA(Pro) is not edited by ProRS. This chain is Proline--tRNA ligase, found in Buchnera aphidicola subsp. Acyrthosiphon pisum (strain APS) (Acyrthosiphon pisum symbiotic bacterium).